Consider the following 99-residue polypeptide: NADH-quinone oxidoreductase subunit K (99 aa).

A run of 3 helical transmembrane segments spans residues 3-23 (PMYY…GVLL), 28-48 (IIVF…LVTF), and 62-82 (FFVM…IVAI).

Belongs to the complex I subunit 4L family. In terms of assembly, NDH-1 is composed of 14 different subunits. Subunits NuoA, H, J, K, L, M, N constitute the membrane sector of the complex.

The protein localises to the cell membrane. It catalyses the reaction a quinone + NADH + 5 H(+)(in) = a quinol + NAD(+) + 4 H(+)(out). Functionally, NDH-1 shuttles electrons from NADH, via FMN and iron-sulfur (Fe-S) centers, to quinones in the respiratory chain. The immediate electron acceptor for the enzyme in this species is believed to be a menaquinone. Couples the redox reaction to proton translocation (for every two electrons transferred, four hydrogen ions are translocated across the cytoplasmic membrane), and thus conserves the redox energy in a proton gradient. This Acidothermus cellulolyticus (strain ATCC 43068 / DSM 8971 / 11B) protein is NADH-quinone oxidoreductase subunit K.